We begin with the raw amino-acid sequence, 70 residues long: Large ribosomal subunit protein uL29 (70 aa).

It belongs to the universal ribosomal protein uL29 family.

The polypeptide is Large ribosomal subunit protein uL29 (Prochlorococcus marinus (strain NATL1A)).